The following is a 428-amino-acid chain: Enolase (428 aa).

Residue Q163 participates in (2R)-2-phosphoglycerate binding. The active-site Proton donor is E205. D242, E285, and D312 together coordinate Mg(2+). K337, R366, S367, and K388 together coordinate (2R)-2-phosphoglycerate. The active-site Proton acceptor is K337.

This sequence belongs to the enolase family. Mg(2+) serves as cofactor.

The protein localises to the cytoplasm. It localises to the secreted. The protein resides in the cell surface. It catalyses the reaction (2R)-2-phosphoglycerate = phosphoenolpyruvate + H2O. The protein operates within carbohydrate degradation; glycolysis; pyruvate from D-glyceraldehyde 3-phosphate: step 4/5. Catalyzes the reversible conversion of 2-phosphoglycerate (2-PG) into phosphoenolpyruvate (PEP). It is essential for the degradation of carbohydrates via glycolysis. The chain is Enolase from Neisseria meningitidis serogroup C (strain 053442).